A 253-amino-acid polypeptide reads, in one-letter code: Triosephosphate isomerase (253 aa).

A substrate-binding site is contributed by 9-11 (NWK). His96 (electrophile) is an active-site residue. Glu169 acts as the Proton acceptor in catalysis. Substrate is bound by residues Gly175, Ser215, and 236 to 237 (GG).

The protein belongs to the triosephosphate isomerase family. In terms of assembly, homodimer.

It is found in the cytoplasm. The enzyme catalyses D-glyceraldehyde 3-phosphate = dihydroxyacetone phosphate. It functions in the pathway carbohydrate biosynthesis; gluconeogenesis. The protein operates within carbohydrate degradation; glycolysis; D-glyceraldehyde 3-phosphate from glycerone phosphate: step 1/1. Its function is as follows. Involved in the gluconeogenesis. Catalyzes stereospecifically the conversion of dihydroxyacetone phosphate (DHAP) to D-glyceraldehyde-3-phosphate (G3P). This is Triosephosphate isomerase from Borrelia garinii subsp. bavariensis (strain ATCC BAA-2496 / DSM 23469 / PBi) (Borreliella bavariensis).